A 122-amino-acid chain; its full sequence is uncharacterized protein (122 aa).

A helical membrane pass occupies residues 9-25 (AFPSPVFLGGVFFVFFF).

Its subcellular location is the cytoplasm. The protein localises to the nucleus. It localises to the membrane. This is an uncharacterized protein from Saccharomyces cerevisiae (strain ATCC 204508 / S288c) (Baker's yeast).